Consider the following 341-residue polypeptide: S-adenosylmethionine:tRNA ribosyltransferase-isomerase (341 aa).

It belongs to the QueA family. In terms of assembly, monomer.

The protein localises to the cytoplasm. It carries out the reaction 7-aminomethyl-7-carbaguanosine(34) in tRNA + S-adenosyl-L-methionine = epoxyqueuosine(34) in tRNA + adenine + L-methionine + 2 H(+). The protein operates within tRNA modification; tRNA-queuosine biosynthesis. In terms of biological role, transfers and isomerizes the ribose moiety from AdoMet to the 7-aminomethyl group of 7-deazaguanine (preQ1-tRNA) to give epoxyqueuosine (oQ-tRNA). This Thermoanaerobacter sp. (strain X514) protein is S-adenosylmethionine:tRNA ribosyltransferase-isomerase.